The chain runs to 994 residues: Cation-chloride cotransporter 2 (994 aa).

The segment at 1–28 (MERGGFGGAGRHDEEAPAMRPAPQQRYR) is disordered. Residues 1 to 139 (MERGGFGGAG…GHPKETETKL (139 aa)) are Cytoplasmic-facing. Residues 140–160 (DTMMGVFVPCLQNILGIIYYI) form a helical membrane-spanning segment. Residues 161-174 (RFTWIVGMGGVWQS) are Extracellular-facing. A helical membrane pass occupies residues 175-195 (LVLVAFCGSCTFLTTISLSAI). The Cytoplasmic segment spans residues 196–221 (ATNGAMKGGGPYYLIGRALGPEVGVS). A helical transmembrane segment spans residues 222 to 242 (IGLCFFLGNAVAGAMYVLGAV). The Extracellular portion of the chain corresponds to 243–287 (ETFLDAVPSAEFFQESVTVVTNTFVNGTAAGNATTISTPNLHDLQ). Asn-268 and Asn-274 each carry an N-linked (GlcNAc...) asparagine glycan. The chain crosses the membrane as a helical span at residues 288-308 (VYGIIVTILLCFIVFGGVKII). Residues 309 to 311 (NKV) are Cytoplasmic-facing. The chain crosses the membrane as a helical span at residues 312-332 (APAFLIPVLFSILCIYIGVFI). Residues 333–372 (APRPNASKWITGLSITTLKDNWSSDYQRTNNAGVPDPNGS) are Extracellular-facing. N-linked (GlcNAc...) asparagine glycosylation is found at Asn-337, Asn-353, and Asn-370. A helical transmembrane segment spans residues 373–393 (IYWDFNALLGLYFPAVTGIMA). The Cytoplasmic portion of the chain corresponds to 394–412 (GSNRSASLKDTQRSIPIGT). The chain crosses the membrane as a helical span at residues 413-433 (LHATISTTMMYLLSVFLFGAL). Residues 434-448 (STREGLLTDRLLCAA) are Extracellular-facing. Residues 449-469 (VAWPSPAVVYAGIILSTLGAA) form a helical membrane-spanning segment. Topologically, residues 470 to 505 (LQSLTGAPRLLAAIANDDILPVLNYFKAYEGSEPHV) are cytoplasmic. A helical membrane pass occupies residues 506 to 526 (ATLFTSFICISCVIIGNLDVI). Topologically, residues 527 to 529 (TPT) are extracellular. The helical transmembrane segment at 530–552 (ITMFFLLCYAGVNLSCFLLDLLD) threads the bilayer. At 553–558 (APSWRP) the chain is on the cytoplasmic side. A helical membrane pass occupies residues 559–579 (RWKLHHWSLSLIGALLCIVIM). At 580-585 (FMISWT) the chain is on the extracellular side. A helical membrane pass occupies residues 586–606 (FTVVSLALASLIYYYVSLKGK). At 607–994 (AGDWGDGFKS…YRRDVVTLFT (388 aa)) the chain is on the cytoplasmic side.

It belongs to the SLC12A transporter family.

Its subcellular location is the membrane. Functionally, probable cation/chloride cotransporter. The sequence is that of Cation-chloride cotransporter 2 (CCC2) from Oryza sativa subsp. japonica (Rice).